The chain runs to 210 residues: Putative transmembrane protein DDB_G0267530 (210 aa).

The disordered stretch occupies residues Met1–Gln40. Helical transmembrane passes span Val119–Ile139 and Thr148–Val168.

Its subcellular location is the membrane. This is Putative transmembrane protein DDB_G0267530 from Dictyostelium discoideum (Social amoeba).